We begin with the raw amino-acid sequence, 667 residues long: Cylicin-1 (667 aa).

Disordered regions lie at residues 121 to 251 (PYTH…SSNV) and 275 to 634 (SQNN…ILPS). The span at 129–172 (KKAESKKYKDDKKETALKKISKKDTGPHEVDEKPKRRNKADKTP) shows a compositional bias: basic and acidic residues. Over residues 173 to 182 (SKSSHGSQLS) the composition is skewed to low complexity. The span at 187–197 (SKSETNPESKD) shows a compositional bias: basic and acidic residues. Residues 223-237 (STSTKKYSKSSKNNS) show a composition bias toward low complexity. Residues 238-251 (DAVSETCSKNSSNV) are compositionally biased toward polar residues. Basic and acidic residues-rich tracts occupy residues 284–326 (KKDA…KDTE), 345–371 (SKKD…DAKK), 380–394 (SKKD…KDAE), 417–431 (SKKD…KDAE), 438–464 (GDSK…KDAV), 483–506 (SKKD…KEST), 521–533 (SKKD…KKAT), 549–558 (KKTEMFKSSD), and 583–593 (DSKKDAVEPKR). 9 consecutive repeat copies span residues 287–305 (AKKD…DSKD), 306–337 (AKKD…DSKD), 338–368 (AKKG…DSKD), 369–405 (AKKD…DSKD), 406–442 (AKKD…DSKN), 443–475 (AKKD…SEGD), 476–516 (AKKS…ESKK), 517–547 (VKRD…SKRY), and 548–569 (LKKT…FKPG). A 9 X approximate tandem repeats region spans residues 287 to 569 (AKKDAKGKGS…ESEESLFKPG (283 aa)). Over residues 624–633 (PLPPCEPILP) the composition is skewed to pro residues.

In terms of assembly, interacts with proteins of spermatozoa head including ACTL7A, CCIN, FAM209A and SPACA1; the interactions may be necessary for proper acrosome attachment to the nuclear envelope. As to expression, testis.

The protein resides in the cytoplasm. The protein localises to the cytoskeleton. It is found in the perinuclear theca. Its subcellular location is the calyx. Functionally, plays a role in the establishment of normal sperm morphology during spermatogenesis and is required for acrosome attachment to the nuclear envelope. In Bos taurus (Bovine), this protein is Cylicin-1 (CYLC1).